The chain runs to 1302 residues: RNA-directed RNA polymerase (1302 aa).

The RdRp catalytic domain maps to valine 562–valine 823.

Belongs to the reoviridae RNA-directed RNA polymerase family.

It catalyses the reaction RNA(n) + a ribonucleoside 5'-triphosphate = RNA(n+1) + diphosphate. This chain is RNA-directed RNA polymerase (Segment-1), found in Antilocapra americana (Pronghorn).